We begin with the raw amino-acid sequence, 523 residues long: Sensory neuron membrane protein 1 (523 aa).

Residues 1-11 lie on the Cytoplasmic side of the membrane; sequence MQLPRELKYAA. Residues 12 to 32 form a helical membrane-spanning segment; it reads IAGGVALFGLIFGWVLFPTIL. The Extracellular segment spans residues 33–458; the sequence is KSQLKKEMAL…HQLFIPKRVV (426 aa). A glycan (N-linked (GlcNAc...) asparagine) is linked at N229. 3 disulfide bridges follow: C268/C333, C297/C352, and C335/C341. An N-linked (GlcNAc...) asparagine glycan is attached at N440. The chain crosses the membrane as a helical span at residues 459 to 479; it reads GVLRWWMVSFGSLGAVIGIVF. Residues 480-523 are Cytoplasmic-facing; that stretch reads HFRDHIMRLAVSGDTKVSKVIPEVEEQKDISVIGQAQEPAKVNI.

It belongs to the CD36 family.

The protein localises to the cell membrane. Plays an olfactory role that is not restricted to pheromone sensitivity. The protein is Sensory neuron membrane protein 1 of Helicoverpa assulta (Oriental tobacco budworm).